The sequence spans 310 residues: NAD kinase 1 (310 aa).

Catalysis depends on Asp-68, which acts as the Proton acceptor. Residues 68 to 69 (DG), 145 to 146 (NE), Arg-156, His-175, and Asp-177 each bind NAD(+).

The protein belongs to the NAD kinase family. A divalent metal cation serves as cofactor.

The protein localises to the cytoplasm. The enzyme catalyses NAD(+) + ATP = ADP + NADP(+) + H(+). Functionally, involved in the regulation of the intracellular balance of NAD and NADP, and is a key enzyme in the biosynthesis of NADP. Catalyzes specifically the phosphorylation on 2'-hydroxyl of the adenosine moiety of NAD to yield NADP. This Gloeobacter violaceus (strain ATCC 29082 / PCC 7421) protein is NAD kinase 1.